The sequence spans 563 residues: DNA repair protein rhp7 (563 aa).

Residues 1-101 (MSSGSRVRGP…TDEEAEDNED (101 aa)) are disordered. The span at 39–59 (ESAGQSTGTESEVIQTPTSVE) shows a compositional bias: polar residues. Residues 78-90 (VKRRNLRNQKKKK) are compositionally biased toward basic residues.

It belongs to the RAD7 family.

It localises to the nucleus. Involved in global genome repair (GGR) via nucleotide excision repair (NER), in conjunction with rhp16, after UV irradiation. The protein is DNA repair protein rhp7 (rhp7) of Schizosaccharomyces pombe (strain 972 / ATCC 24843) (Fission yeast).